The following is a 458-amino-acid chain: Ammonium transporter Rh type B (458 aa).

The Cytoplasmic portion of the chain corresponds to 1-13 (MAGSPSRAAGRRL). A helical transmembrane segment spans residues 14–34 (QLPLLCLFLQGATAVLFAVFV). Topologically, residues 35 to 61 (RYNHKTDAALWHRSNHSNADNEFYFRY) are extracellular. A glycan (N-linked (GlcNAc...) asparagine) is linked at asparagine 49. The helical transmembrane segment at 62 to 82 (PSFQDVHAMVFVGFGFLMVFL) threads the bilayer. The Cytoplasmic segment spans residues 83-86 (QRYG). Residues 87–107 (FSSVGFTFLLAAFALQWSTLV) form a helical membrane-spanning segment. The Extracellular portion of the chain corresponds to 108–124 (QGFLHSFHGGHIHVGVE). The chain crosses the membrane as a helical span at residues 125–145 (SMINADFCAGAVLISFGAVLG). Topologically, residues 146 to 149 (KTGP) are cytoplasmic. Residues 150–170 (AQLLLMALLEVVLFGINEFVL) form a helical membrane-spanning segment. Residues 171–178 (LHLLGVRD) lie on the Extracellular side of the membrane. Residues 179-201 (AGGSMTIHTFGAYFGLVLSRVLY) form a helical membrane-spanning segment. The Cytoplasmic segment spans residues 202-219 (RPQLEKSKHRQGSVYHSD). Residues 220–240 (LFAMIGTIFLWIFWPSFNAAL) traverse the membrane as a helical segment. Residues 241–251 (TALGAGQHRTA) lie on the Extracellular side of the membrane. Residues 252 to 272 (LNTYYSLAASTLGTFALSALV) traverse the membrane as a helical segment. Over 273-282 (GEDGRLDMVH) the chain is Cytoplasmic. A helical transmembrane segment spans residues 283–303 (IQNAALAGGVVVGTSSEMMLT). Position 304 (proline 304) is a topological domain, extracellular. The helical transmembrane segment at 305–325 (FGALTAGFLAGTVSTLGYKFF) threads the bilayer. Residues 326-346 (RPILESKFKVQDTCGVHNLHG) are Cytoplasmic-facing. A helical transmembrane segment spans residues 347-367 (MPGVLGALLGVLVAGLATHEA). Residues 368–393 (YGDGLESVFPLIAEGQRSATSQAMHQ) lie on the Extracellular side of the membrane. Residues 394–414 (LFGLFVTLMFASVGGGLGGLL) traverse the membrane as a helical segment. Residues 415–458 (LKLPFLDSPPDSQCYEDQVHWQVPGEHEDKAQRPLRVEEADTQA) are Cytoplasmic-facing. The tract at residues 416–424 (KLPFLDSPP) is interaction with ANK3. A Basolateral sorting signal motif is present at residues 429-432 (YEDQ). Residues 439–458 (GEHEDKAQRPLRVEEADTQA) are disordered.

It belongs to the ammonium transporter (TC 2.A.49) family. Rh subfamily. As to quaternary structure, interacts (via C-terminus) with ANK2 and ANK3; required for targeting to the basolateral membrane. Post-translationally, N-glycosylated.

Its subcellular location is the cell membrane. The protein localises to the basolateral cell membrane. The catalysed reaction is NH4(+)(in) = NH4(+)(out). It carries out the reaction methylamine(out) = methylamine(in). The enzyme catalyses CO2(out) = CO2(in). In terms of biological role, ammonium transporter involved in the maintenance of acid-base homeostasis. Transports ammonium and its related derivative methylammonium across the basolateral plasma membrane of epithelial cells likely contributing to renal transepithelial ammonia transport and ammonia metabolism. May transport either NH4(+) or NH3 ammonia species predominantly mediating an electrogenic NH4(+) transport. May act as a CO2 channel providing for renal acid secretion. The protein is Ammonium transporter Rh type B (RHBG) of Pan troglodytes (Chimpanzee).